The sequence spans 166 residues: NAD(P)H-quinone oxidoreductase subunit I, chloroplastic (166 aa).

2 consecutive 4Fe-4S ferredoxin-type domains span residues 55-84 (GRIH…VDWK) and 95-124 (LNYS…MTEE). The [4Fe-4S] cluster site is built by C64, C67, C70, C74, C104, C107, C110, and C114.

The protein belongs to the complex I 23 kDa subunit family. As to quaternary structure, NDH is composed of at least 16 different subunits, 5 of which are encoded in the nucleus. It depends on [4Fe-4S] cluster as a cofactor.

It is found in the plastid. It localises to the chloroplast thylakoid membrane. The catalysed reaction is a plastoquinone + NADH + (n+1) H(+)(in) = a plastoquinol + NAD(+) + n H(+)(out). It catalyses the reaction a plastoquinone + NADPH + (n+1) H(+)(in) = a plastoquinol + NADP(+) + n H(+)(out). In terms of biological role, NDH shuttles electrons from NAD(P)H:plastoquinone, via FMN and iron-sulfur (Fe-S) centers, to quinones in the photosynthetic chain and possibly in a chloroplast respiratory chain. The immediate electron acceptor for the enzyme in this species is believed to be plastoquinone. Couples the redox reaction to proton translocation, and thus conserves the redox energy in a proton gradient. This Chamaechaenactis scaposa (Fullstem) protein is NAD(P)H-quinone oxidoreductase subunit I, chloroplastic.